We begin with the raw amino-acid sequence, 143 residues long: Transcriptional regulator MraZ (143 aa).

SpoVT-AbrB domains follow at residues 5–47 (EYKH…SLKE) and 76–119 (ACEC…SEEN).

The protein belongs to the MraZ family. Forms oligomers.

The protein resides in the cytoplasm. It localises to the nucleoid. The protein is Transcriptional regulator MraZ of Caldicellulosiruptor saccharolyticus (strain ATCC 43494 / DSM 8903 / Tp8T 6331).